A 168-amino-acid chain; its full sequence is Photosystem I assembly protein Ycf3 (168 aa).

TPR repeat units follow at residues 35 to 68, 72 to 105, and 120 to 153; these read AFTY…EIDP, SYIL…NPFL, and GEQA…TPGN.

Belongs to the Ycf3 family.

Its subcellular location is the plastid. It localises to the chloroplast thylakoid membrane. Essential for the assembly of the photosystem I (PSI) complex. May act as a chaperone-like factor to guide the assembly of the PSI subunits. The chain is Photosystem I assembly protein Ycf3 from Solanum tuberosum (Potato).